The primary structure comprises 173 residues: Crossover junction endodeoxyribonuclease RuvC (173 aa).

Active-site residues include D8, E67, and D139. Residues D8, E67, and D139 each contribute to the Mg(2+) site.

The protein belongs to the RuvC family. Homodimer which binds Holliday junction (HJ) DNA. The HJ becomes 2-fold symmetrical on binding to RuvC with unstacked arms; it has a different conformation from HJ DNA in complex with RuvA. In the full resolvosome a probable DNA-RuvA(4)-RuvB(12)-RuvC(2) complex forms which resolves the HJ. It depends on Mg(2+) as a cofactor.

It is found in the cytoplasm. It carries out the reaction Endonucleolytic cleavage at a junction such as a reciprocal single-stranded crossover between two homologous DNA duplexes (Holliday junction).. Functionally, the RuvA-RuvB-RuvC complex processes Holliday junction (HJ) DNA during genetic recombination and DNA repair. Endonuclease that resolves HJ intermediates. Cleaves cruciform DNA by making single-stranded nicks across the HJ at symmetrical positions within the homologous arms, yielding a 5'-phosphate and a 3'-hydroxyl group; requires a central core of homology in the junction. The consensus cleavage sequence is 5'-(A/T)TT(C/G)-3'. Cleavage occurs on the 3'-side of the TT dinucleotide at the point of strand exchange. HJ branch migration catalyzed by RuvA-RuvB allows RuvC to scan DNA until it finds its consensus sequence, where it cleaves and resolves the cruciform DNA. This is Crossover junction endodeoxyribonuclease RuvC from Shewanella loihica (strain ATCC BAA-1088 / PV-4).